The sequence spans 113 residues: MKRRSVCVGDTVYVLAGNDKGKQGKVLSCLREKNKVVVEGVNVRTKNIKRSQENPKGKRINIEAPIHISNVRLSIDGAPAKLSVKVTENGRELWNKSSDGTSKLYRSVKERKG.

The protein belongs to the universal ribosomal protein uL24 family. In terms of assembly, part of the 50S ribosomal subunit.

Functionally, one of two assembly initiator proteins, it binds directly to the 5'-end of the 23S rRNA, where it nucleates assembly of the 50S subunit. Its function is as follows. One of the proteins that surrounds the polypeptide exit tunnel on the outside of the subunit. The protein is Large ribosomal subunit protein uL24 of Chlamydia abortus (strain DSM 27085 / S26/3) (Chlamydophila abortus).